The following is a 656-amino-acid chain: Protein sly1 homolog (656 aa).

Repeat copies occupy residues 85–121 (DENLDRIQQDFSNGLYDIYHLNFLAPITRSKIENLAA), 203–245 (RNSA…FSFQ), 419–456 (LELLRDAEFGQPEDKLRLYIIYYICAQQLPEPELERLR), and 460–496 (QSAGCDLTALAYVQRWKSIMNRSPSISQATQYEGGGT). A 4 X approximate repeats region spans residues 85-496 (DENLDRIQQD…QATQYEGGGT (412 aa)).

Belongs to the STXBP/unc-18/SEC1 family.

The protein localises to the cytoplasm. The protein resides in the membrane. Functionally, non-vital for development. The sequence is that of Protein sly1 homolog (Slh) from Drosophila virilis (Fruit fly).